The sequence spans 574 residues: MGVTSLLFCGVFFLLLLFVAADTCEDIFMHNVIISEGQPFPFNCTYPPETNGAVNLTWYKTPSKSPVSNNRHLRVHQDQTWILFLPLTLEDSGIYQCVIRNAHNCYQIAVNLTVLKNHWCDSSMEGSPVNSPDVYQQILPIGKSGSLNCHLYFPESCALDSIKWYKGCEEIKAGKKYSPSGAKLLVNNVAVEDGGSYACSARLTHLGRHFTIRNYIAVNTKEVEYGRRIPNITYPKNNSIEVPLGSTLIVNCNITDTKENTNLRCWRVNNTLVDDYYKDSKRIQEGIETNVSLRDQIRYTVNITFLKVKMEDYGRPFTCHAGVSAAYIILIYPVPDFRAYLLGGLMAFLLLVVSVLFIYNSFKIDIMLWYRSAFHTAQAPDDEKLYDAYVLYPKYPRGSQGHDVDTLVLKILPEVLEKQCGYKLFIFGRDEFPGQAVASVIDENIKLCRRLMVFVAPESSSFGFLKNLSEEQIAVYNALIQHGMKVILIELEKVKDYSTMPESIQYIRQKHGAIQWDGDFTEQSQCAKTKFWKKVRYHMPPRRYPASSPVQLLGHIPCNCKAGKCNAATGLITP.

The first 21 residues, 1–21, serve as a signal peptide directing secretion; that stretch reads MGVTSLLFCGVFFLLLLFVAA. Residues 22–338 lie on the Extracellular side of the membrane; the sequence is DTCEDIFMHN…ILIYPVPDFR (317 aa). Ig-like C2-type domains follow at residues 25-113, 132-215, and 225-321; these read EDIF…VNLT, PDVY…IRNY, and YGRR…TCHA. 3 N-linked (GlcNAc...) asparagine glycosylation sites follow: Asn-43, Asn-55, and Asn-111. A disulfide bond links Cys-44 and Cys-97. The cysteines at positions 149 and 199 are disulfide-linked. Asn-231, Asn-237, Asn-253, Asn-269, Asn-290, and Asn-302 each carry an N-linked (GlcNAc...) asparagine glycan. Cys-252 and Cys-319 are oxidised to a cystine. A helical membrane pass occupies residues 339–359; the sequence is AYLLGGLMAFLLLVVSVLFIY. Residues 360 to 574 are Cytoplasmic-facing; it reads NSFKIDIMLW…CNAATGLITP (215 aa). The region spanning 384–539 is the TIR domain; that stretch reads KLYDAYVLYP…KFWKKVRYHM (156 aa). Residue Glu-470 is part of the active site.

This sequence belongs to the interleukin-1 receptor family. As to quaternary structure, interacts with IL1RAP; the association is enhanced by IL36B indicative for an functional signaling complex and inhibited by IL36RN. In terms of tissue distribution, expressed in bone marrow-derived dendritic cells, splenic CD4(+) T-cells, bone marrow-derived macrophages and bone marrow-derived neutrophils.

The protein resides in the membrane. It catalyses the reaction NAD(+) + H2O = ADP-D-ribose + nicotinamide + H(+). Functionally, receptor for interleukin-36 (IL36A, IL36B and IL36G). After binding to interleukin-36 associates with the coreceptor IL1RAP to form the interleukin-36 receptor complex which mediates interleukin-36-dependent activation of NF-kappa-B, MAPK and other pathways. The IL-36 signaling system is thought to be present in epithelial barriers and to take part in local inflammatory response; it is similar to the IL-1 system. Seems to be involved in skin inflammatory response by induction of the IL-23/IL-17/IL-22 pathway. The sequence is that of Interleukin-1 receptor-like 2 (Il1rl2) from Mus musculus (Mouse).